The following is a 263-amino-acid chain: 3-methyl-2-oxobutanoate hydroxymethyltransferase (263 aa).

Residues Asp-45 and Asp-84 each coordinate Mg(2+). Residues 45-46 (DS), Asp-84, and Lys-112 contribute to the 3-methyl-2-oxobutanoate site. Glu-114 is a Mg(2+) binding site. Residue Glu-180 is the Proton acceptor of the active site.

The protein belongs to the PanB family. In terms of assembly, homodecamer; pentamer of dimers. Requires Mg(2+) as cofactor.

The protein localises to the cytoplasm. It carries out the reaction 3-methyl-2-oxobutanoate + (6R)-5,10-methylene-5,6,7,8-tetrahydrofolate + H2O = 2-dehydropantoate + (6S)-5,6,7,8-tetrahydrofolate. Its pathway is cofactor biosynthesis; (R)-pantothenate biosynthesis; (R)-pantoate from 3-methyl-2-oxobutanoate: step 1/2. In terms of biological role, catalyzes the reversible reaction in which hydroxymethyl group from 5,10-methylenetetrahydrofolate is transferred onto alpha-ketoisovalerate to form ketopantoate. This is 3-methyl-2-oxobutanoate hydroxymethyltransferase from Klebsiella pneumoniae (strain 342).